A 369-amino-acid polypeptide reads, in one-letter code: uncharacterized protein (369 aa).

This is an uncharacterized protein from Caenorhabditis elegans.